Consider the following 324-residue polypeptide: Reaction center protein M chain (324 aa).

The Cytoplasmic segment spans residues A2–Y51. Residues L52–A76 traverse the membrane as a helical segment. The Periplasmic segment spans residues E77 to D110. Residues G111–R137 form a helical membrane-spanning segment. Over A138 to G142 the chain is Cytoplasmic. Residues T143 to L166 form a helical membrane-spanning segment. Over V167–Y197 the chain is Periplasmic. Residues H181 and H201 each coordinate (7R,8Z)-bacteriochlorophyll b. A helical transmembrane segment spans residues C198–L223. Positions 218 and 233 each coordinate Fe cation. Over A224 to A259 the chain is Cytoplasmic. Residue W251 participates in a ubiquinone binding. Residues T260 to L284 traverse the membrane as a helical segment. A Fe cation-binding site is contributed by H265. The Periplasmic portion of the chain corresponds to L285–K324.

The protein belongs to the reaction center PufL/M/PsbA/D family. Reaction center is composed of four bacteriochlorophylls, two bacteriopheophytins, two ubiquinones, one iron, and three highly hydrophobic polypeptide chains (designated L, M, and H).

It localises to the cellular chromatophore membrane. Its function is as follows. The reaction center is a membrane-bound complex that mediates the initial photochemical event in the electron transfer process of photosynthesis. This Blastochloris viridis (Rhodopseudomonas viridis) protein is Reaction center protein M chain (pufM).